A 198-amino-acid chain; its full sequence is MYDYIKGQLTKITAKYIVVETNGLGYIINVANPYSFTDSVNQLVTIYLHQVIREDAHLLFGFHTEDEKDVFLKLISVSGIGPTTALAIVAVDDNEGLVNAIDNSDIKYLMKFPKIGKKTAQQMVLDLAGKFVEAPQETGNTKARSNKAGNTQLDEAIEALLALGYKAAELKKIRAFFEGTSETAEQYIKSALKLLMKG.

The tract at residues 1 to 63 (MYDYIKGQLT…EDAHLLFGFH (63 aa)) is domain I. Residues 64–142 (TEDEKDVFLK…EAPQETGNTK (79 aa)) form a domain II region. Residues 143–147 (ARSNK) form a flexible linker region. Residues 148 to 198 (AGNTQLDEAIEALLALGYKAAELKKIRAFFEGTSETAEQYIKSALKLLMKG) are domain III.

Belongs to the RuvA family. Homotetramer. Forms an RuvA(8)-RuvB(12)-Holliday junction (HJ) complex. HJ DNA is sandwiched between 2 RuvA tetramers; dsDNA enters through RuvA and exits via RuvB. An RuvB hexamer assembles on each DNA strand where it exits the tetramer. Each RuvB hexamer is contacted by two RuvA subunits (via domain III) on 2 adjacent RuvB subunits; this complex drives branch migration. In the full resolvosome a probable DNA-RuvA(4)-RuvB(12)-RuvC(2) complex forms which resolves the HJ.

The protein localises to the cytoplasm. Its function is as follows. The RuvA-RuvB-RuvC complex processes Holliday junction (HJ) DNA during genetic recombination and DNA repair, while the RuvA-RuvB complex plays an important role in the rescue of blocked DNA replication forks via replication fork reversal (RFR). RuvA specifically binds to HJ cruciform DNA, conferring on it an open structure. The RuvB hexamer acts as an ATP-dependent pump, pulling dsDNA into and through the RuvAB complex. HJ branch migration allows RuvC to scan DNA until it finds its consensus sequence, where it cleaves and resolves the cruciform DNA. In Streptococcus pyogenes serotype M28 (strain MGAS6180), this protein is Holliday junction branch migration complex subunit RuvA.